A 367-amino-acid chain; its full sequence is Undecaprenyl-phosphate alpha-N-acetylglucosaminyl 1-phosphate transferase (367 aa).

The next 9 helical transmembrane spans lie at 3–23 (LLTALSELISIFLFTTIFIFL), 45–65 (GVIPLVGGISVFAGICFMFGL), 69–89 (YIPHLSLYLICAGVLVFVGAM), 129–149 (WELVLGPFGYFLTLFAVWAAI), 158–178 (IDGLLGGLSSVSFAAMGLILW), 187–207 (MWCFAMIAAILPYIMLNLGIL), 213–233 (VFMGDAGSTLIGFTVIWLLLE), 242–262 (ISPVTALWIIAIPLMDMVAIM), and 318–338 (VPEWVMLVLFLLAFFLYGYCI).

The protein belongs to the glycosyltransferase 4 family. WecA subfamily. Mg(2+) is required as a cofactor. Mn(2+) serves as cofactor.

It localises to the cell inner membrane. It catalyses the reaction di-trans,octa-cis-undecaprenyl phosphate + UDP-N-acetyl-alpha-D-glucosamine = N-acetyl-alpha-D-glucosaminyl-di-trans,octa-cis-undecaprenyl diphosphate + UMP. It participates in bacterial outer membrane biogenesis; LPS O-antigen biosynthesis. Its pathway is bacterial outer membrane biogenesis; enterobacterial common antigen biosynthesis. Inhibited by tunicamycin. Its function is as follows. Catalyzes the transfer of the GlcNAc-1-phosphate moiety from UDP-GlcNAc onto the carrier lipid undecaprenyl phosphate (C55-P), yielding GlcNAc-pyrophosphoryl-undecaprenyl (GlcNAc-PP-C55). The chain is Undecaprenyl-phosphate alpha-N-acetylglucosaminyl 1-phosphate transferase from Salmonella typhimurium (strain LT2 / SGSC1412 / ATCC 700720).